The sequence spans 254 residues: Adenosylcobinamide-GDP ribazoletransferase (254 aa).

The next 7 membrane-spanning stretches (helical) occupy residues 27 to 47 (SSLY…VLFA), 50 to 70 (GMGA…GFIL), 104 to 124 (VGSF…ICLL), 131 to 151 (AYGM…LLAA), 170 to 190 (AGWP…FVLL), 194 to 214 (VVPS…VGWL), and 233 to 253 (LVEI…FSAI).

It belongs to the CobS family. The cofactor is Mg(2+).

It localises to the cell inner membrane. The enzyme catalyses alpha-ribazole + adenosylcob(III)inamide-GDP = adenosylcob(III)alamin + GMP + H(+). The catalysed reaction is alpha-ribazole 5'-phosphate + adenosylcob(III)inamide-GDP = adenosylcob(III)alamin 5'-phosphate + GMP + H(+). It participates in cofactor biosynthesis; adenosylcobalamin biosynthesis; adenosylcobalamin from cob(II)yrinate a,c-diamide: step 7/7. Its function is as follows. Joins adenosylcobinamide-GDP and alpha-ribazole to generate adenosylcobalamin (Ado-cobalamin). Also synthesizes adenosylcobalamin 5'-phosphate from adenosylcobinamide-GDP and alpha-ribazole 5'-phosphate. This is Adenosylcobinamide-GDP ribazoletransferase from Chlorobaculum parvum (strain DSM 263 / NCIMB 8327) (Chlorobium vibrioforme subsp. thiosulfatophilum).